A 521-amino-acid polypeptide reads, in one-letter code: MEVLESGEQSVLQWDRKLSELSEPGETEALMYHTHFSELLDEFSQNVLGQLLSDPFLSEKSESMEVEPSPTSPAPLIQAEHSYSLSEEPRTQSPFTHAATSDSFNDEEVESEKWYLSTEFPSATIKTEPITEEQPPGLVPSVTLTITAISTPFEKEESPLDMNAGGDSSCQTLIPKIKLEPHEVDQFLNFSPKEASVDQLHLPPTPPSSHSSDSEGSLSPNPRLHPFSLSQAHSPARAMPRGPSALSTSPLLTAPHKLQGSGPLVLTEEEKRTLVAEGYPIPTKLPLTKSEEKALKKIRRKIKNKISAQESRRKKKEYMDSLEKKVESCSTENLELRKKVEVLENTNRTLLQQLQKLQTLVMGKVSRTCKLAGTQTGTCLMVVVLCFAVAFGSFFQGYGPYPSATKMALPSQHPLSEPYTASVVRSRNLLIYEEHAPLEESSSPASAGELGGWDRGSSLLRASSGLEALPEVDLPHFLISNETSLEKSVLLELQQHLVSSKLEGNETLKVVELERRVNATF.

The Cytoplasmic segment spans residues Met1–Thr378. A compositionally biased stretch (polar residues) spans Tyr83–Ser103. A disordered region spans residues Tyr83 to Asp106. Phosphoserine is present on Ser93. A Glycyl lysine isopeptide (Lys-Gly) (interchain with G-Cter in SUMO2) cross-link involves residue Lys178. Ser191 is subject to Phosphoserine. Residues Ser196–Leu264 form a disordered region. The span at Ser208 to Pro220 shows a compositional bias: low complexity. The 64-residue stretch at Ala294–Leu357 folds into the bZIP domain. The basic motif stretch occupies residues Lys296 to Lys325. Positions Leu336–Leu357 are leucine-zipper. The chain crosses the membrane as a helical; Signal-anchor for type II membrane protein span at residues Cys379–Gly399. At Pro400–Phe521 the chain is on the lumenal side. Residues Arg427 to Leu430 carry the S1P recognition motif. N-linked (GlcNAc...) asparagine glycosylation is found at Asn481, Asn505, and Asn518.

It belongs to the bZIP family. ATF subfamily. As to quaternary structure, binds DNA as a dimer. Upon ER stress, translocated to the Golgi apparatus, where it is processed by regulated intramembrane proteolysis (RIP) to release the cytosol-facing N-terminal transcription factor domain. The cleavage is performed sequentially by site-1 and site-2 proteases (S1P/MBTPS1 and S2P/MBTPS2). In terms of processing, N-glycosylated. Post-translationally, ubiquitinated by HRD1/SYVN1; undergoes 'Lys-48'-linked ubiquitination, followed by rapid proteasomal degradation under normal conditions. Upon ER stress, SYVN1 E3 ubiquitin-protein ligase dissociates from its substrate, ubiquitination does not occur and CREB3L2 is stabilized. Widely expressed, including in lung, bladder, ovary, testis and spleen. Highly expressed in chondrocytes.

It localises to the endoplasmic reticulum membrane. The protein localises to the nucleus. Transcription factor involved in unfolded protein response (UPR). In the absence of endoplasmic reticulum (ER) stress, inserted into ER membranes, with N-terminal DNA-binding and transcription activation domains oriented toward the cytosolic face of the membrane. In response to ER stress, transported to the Golgi, where it is cleaved in a site-specific manner by resident proteases S1P/MBTPS1 and S2P/MBTPS2. The released N-terminal cytosolic domain is translocated to the nucleus to effect transcription of specific target genes. Plays a critical role in chondrogenesis by activating the transcription of SEC23A, which promotes the transport and secretion of cartilage matrix proteins, and possibly that of ER biogenesis-related genes. In a neuroblastoma cell line, protects cells from ER stress-induced death. In vitro activates transcription of target genes via direct binding to the CRE site. The protein is Cyclic AMP-responsive element-binding protein 3-like protein 2 (Creb3l2) of Mus musculus (Mouse).